Reading from the N-terminus, the 234-residue chain is Large ribosomal subunit protein uL1 (234 aa).

Belongs to the universal ribosomal protein uL1 family. As to quaternary structure, part of the 50S ribosomal subunit.

Its function is as follows. Binds directly to 23S rRNA. The L1 stalk is quite mobile in the ribosome, and is involved in E site tRNA release. In terms of biological role, protein L1 is also a translational repressor protein, it controls the translation of the L11 operon by binding to its mRNA. The chain is Large ribosomal subunit protein uL1 from Anaeromyxobacter dehalogenans (strain 2CP-1 / ATCC BAA-258).